A 199-amino-acid polypeptide reads, in one-letter code: Proteasome subunit beta type-2 (199 aa).

This sequence belongs to the peptidase T1B family. As to quaternary structure, the 26S proteasome consists of a 20S proteasome core and two 19S regulatory subunits. The 20S proteasome core is composed of 28 subunits that are arranged in four stacked rings, resulting in a barrel-shaped structure. The two end rings are each formed by seven alpha subunits, and the two central rings are each formed by seven beta subunits. The catalytic chamber with the active sites is on the inside of the barrel.

It localises to the cytoplasm. The protein localises to the nucleus. In terms of biological role, non-catalytic component of the proteasome, a multicatalytic proteinase complex which is characterized by its ability to cleave peptides with Arg, Phe, Tyr, Leu, and Glu adjacent to the leaving group at neutral or slightly basic pH. The proteasome has an ATP-dependent proteolytic activity. The sequence is that of Proteasome subunit beta type-2 (pbs-4) from Caenorhabditis elegans.